A 440-amino-acid chain; its full sequence is Ribosomal protein uS12 methylthiotransferase RimO (440 aa).

Residues 6 to 116 (PKVGFVSLGC…VVTAVHEVVP (111 aa)) enclose the MTTase N-terminal domain. Residues cysteine 15, cysteine 51, cysteine 80, cysteine 149, cysteine 153, and cysteine 156 each contribute to the [4Fe-4S] cluster site. Residues 135 to 373 (LTPRHYAYLK…MAHQQAISAA (239 aa)) enclose the Radical SAM core domain. Residues 376–440 (QLKVGKEIEV…DEYDLWAEPV (65 aa)) form the TRAM domain.

The protein belongs to the methylthiotransferase family. RimO subfamily. The cofactor is [4Fe-4S] cluster.

It is found in the cytoplasm. The catalysed reaction is L-aspartate(89)-[ribosomal protein uS12]-hydrogen + (sulfur carrier)-SH + AH2 + 2 S-adenosyl-L-methionine = 3-methylsulfanyl-L-aspartate(89)-[ribosomal protein uS12]-hydrogen + (sulfur carrier)-H + 5'-deoxyadenosine + L-methionine + A + S-adenosyl-L-homocysteine + 2 H(+). Catalyzes the methylthiolation of an aspartic acid residue of ribosomal protein uS12. The sequence is that of Ribosomal protein uS12 methylthiotransferase RimO from Pseudomonas paraeruginosa (strain DSM 24068 / PA7) (Pseudomonas aeruginosa (strain PA7)).